A 153-amino-acid chain; its full sequence is MALSALRSDSYVDLSQYRDQHFRGNRSDQESLLKQSCTLYVGNLSFYTTEEQIHELFSKSGDVKRIVMGLDKVKKTACGFCFVEYYTRADAEQAMRFINGTRLDDRIVRTDWDAGFKEGRQYGRGKSGGQVRDEYRQDYDAGRGGYGKVVQSF.

Residues Tyr-17, Tyr-40, 109 to 113, 120 to 124, and 130 to 131 each bind mRNA; these read RTDWD, RQYGR, and QV. An RRM domain is found at 37–115; that stretch reads CTLYVGNLSF…RIVRTDWDAG (79 aa).

Belongs to the RRM NCBP2 family. Component of the nuclear cap-binding complex (CBC), a heterodimer composed of ncbp1/cbp80 and ncbp2/cbp20 that interacts with m7GpppG-capped RNA.

Its subcellular location is the nucleus. The protein localises to the cytoplasm. In terms of biological role, component of the cap-binding complex (CBC), which binds co-transcriptionally to the 5' cap of pre-mRNAs and is involved in various processes such as pre-mRNA splicing, translation regulation, nonsense-mediated mRNA decay, RNA-mediated gene silencing (RNAi) by microRNAs (miRNAs) and mRNA export. The CBC complex is involved in mRNA export from the nucleus, leading to the recruitment of the mRNA export machinery to the 5' end of mRNA and to mRNA export in a 5' to 3' direction through the nuclear pore. The CBC complex is also involved in mediating U snRNA and intronless mRNAs export from the nucleus. The CBC complex is essential for a pioneer round of mRNA translation, before steady state translation when the CBC complex is replaced by cytoplasmic cap-binding protein eIF4E. The pioneer round of mRNA translation mediated by the CBC complex plays a central role in nonsense-mediated mRNA decay (NMD), NMD only taking place in mRNAs bound to the CBC complex, but not on eIF4E-bound mRNAs. The CBC complex enhances NMD in mRNAs containing at least one exon-junction complex (EJC), promoting the interaction between upf1 and upf2. The CBC complex is also involved in 'failsafe' NMD, which is independent of the EJC complex, while it does not participate in Staufen-mediated mRNA decay (SMD). During cell proliferation, the CBC complex is also involved in microRNAs (miRNAs) biogenesis via its interaction with srrt/ars2, thereby being required for miRNA-mediated RNA interference. The CBC complex also acts as a negative regulator of parn, thereby acting as an inhibitor of mRNA deadenylation. In the CBC complex, ncbp2/cbp20 recognizes and binds capped RNAs (m7GpppG-capped RNA) but requires ncbp1/cbp80 to stabilize the movement of its N-terminal loop and lock the CBC into a high affinity cap-binding state with the cap structure. The conventional cap-binding complex with NCBP2 binds both small nuclear RNA (snRNA) and messenger (mRNA) and is involved in their export from the nucleus. The chain is Nuclear cap-binding protein subunit 2 (ncbp2) from Xenopus laevis (African clawed frog).